Consider the following 44-residue polypeptide: MKRTYQPSKIVRKRRHGFRARMASKSGRAIINNRRRKGRHVLCA.

It belongs to the bacterial ribosomal protein bL34 family.

The protein is Large ribosomal subunit protein bL34 of Neorickettsia sennetsu (strain ATCC VR-367 / Miyayama) (Ehrlichia sennetsu).